A 216-amino-acid polypeptide reads, in one-letter code: UPF0711 protein C18orf21 homolog (216 aa).

Disordered stretches follow at residues 118–185 (RSFL…ASKT) and 197–216 (SQSE…LSSL). Over residues 124 to 136 (LKSNPTTPTSKLS) the composition is skewed to polar residues. S126 carries the post-translational modification Phosphoserine. Phosphothreonine is present on residues T130 and T139. Composition is skewed to polar residues over residues 145 to 157 (PSSA…SGSK) and 167 to 182 (TPTS…SKNA). The segment covering 200–209 (ESKKNPKMDF) has biased composition (basic and acidic residues).

Belongs to the UPF0711 family.

In Bos taurus (Bovine), this protein is UPF0711 protein C18orf21 homolog.